Here is a 553-residue protein sequence, read N- to C-terminus: Replication factor C large subunit (553 aa).

Residue 50-57 (GGPGVGKT) participates in ATP binding. The tract at residues 438–553 (GKRPGKPEAG…SKKQRTLFDF (116 aa)) is disordered. The span at 442–451 (GKPEAGEPRE) shows a compositional bias: basic and acidic residues. A compositionally biased stretch (low complexity) spans 503-513 (EAPMAAAMPAA). The span at 532-553 (EPEKPPAAEDKCSKKQRTLFDF) shows a compositional bias: basic and acidic residues.

This sequence belongs to the activator 1 small subunits family. RfcL subfamily. As to quaternary structure, heteromultimer composed of small subunits (RfcS) and large subunits (RfcL).

In terms of biological role, part of the RFC clamp loader complex which loads the PCNA sliding clamp onto DNA. This is Replication factor C large subunit from Methanocella arvoryzae (strain DSM 22066 / NBRC 105507 / MRE50).